Reading from the N-terminus, the 37-residue chain is Large ribosomal subunit protein bL36 (37 aa).

This sequence belongs to the bacterial ribosomal protein bL36 family.

The chain is Large ribosomal subunit protein bL36 from Azoarcus sp. (strain BH72).